Here is a 187-residue protein sequence, read N- to C-terminus: Early E3 20.6 kDa glycoprotein (187 aa).

Asn-30, Asn-73, Asn-117, Asn-134, and Asn-135 each carry an N-linked (GlcNAc...) asparagine; by host glycan.

The protein belongs to the adenoviridae E3_20 family.

This Human adenovirus B serotype 35 (HAdV-35) protein is Early E3 20.6 kDa glycoprotein.